A 150-amino-acid chain; its full sequence is Large ribosomal subunit protein bL9 (150 aa).

The protein belongs to the bacterial ribosomal protein bL9 family.

Its function is as follows. Binds to the 23S rRNA. In Neisseria meningitidis serogroup C / serotype 2a (strain ATCC 700532 / DSM 15464 / FAM18), this protein is Large ribosomal subunit protein bL9.